Here is a 145-residue protein sequence, read N- to C-terminus: uncharacterized protein (145 aa).

A helical membrane pass occupies residues 63–83 (FLCLPLFLSFLVANLILWLSF).

It localises to the mitochondrion membrane. This is an uncharacterized protein from Arabidopsis thaliana (Mouse-ear cress).